We begin with the raw amino-acid sequence, 342 residues long: Methionyl-tRNA formyltransferase (342 aa).

108–111 (SLLP) contacts (6S)-5,6,7,8-tetrahydrofolate.

This sequence belongs to the Fmt family.

The catalysed reaction is L-methionyl-tRNA(fMet) + (6R)-10-formyltetrahydrofolate = N-formyl-L-methionyl-tRNA(fMet) + (6S)-5,6,7,8-tetrahydrofolate + H(+). In terms of biological role, attaches a formyl group to the free amino group of methionyl-tRNA(fMet). The formyl group appears to play a dual role in the initiator identity of N-formylmethionyl-tRNA by promoting its recognition by IF2 and preventing the misappropriation of this tRNA by the elongation apparatus. This is Methionyl-tRNA formyltransferase from Prochlorococcus marinus (strain MIT 9303).